We begin with the raw amino-acid sequence, 637 residues long: Acetolactate synthase 2, chloroplastic (637 aa).

Residues 1-73 (MASFSFFGTI…SSKYAPNVPR (73 aa)) constitute a chloroplast transit peptide. Residues 35-69 (RRATRVSVSANSKKDQDRTASRRENPSTFSSKYAP) form a disordered region. The span at 46–59 (SKKDQDRTASRREN) shows a compositional bias: basic and acidic residues. E120 lines the thiamine diphosphate pocket. FAD contacts are provided by residues R222, 329–350 (HGTV…FGVR), and 372–391 (DIDS…VCCD). The segment at 462-542 (QHQMWAAQFY…VKVLLINNQH (81 aa)) is thiamine pyrophosphate binding. D513 and N540 together coordinate Mg(2+).

The protein belongs to the TPP enzyme family. Mg(2+) is required as a cofactor. Thiamine diphosphate serves as cofactor.

It localises to the plastid. The protein resides in the chloroplast. The catalysed reaction is 2 pyruvate + H(+) = (2S)-2-acetolactate + CO2. It functions in the pathway amino-acid biosynthesis; L-isoleucine biosynthesis; L-isoleucine from 2-oxobutanoate: step 1/4. Its pathway is amino-acid biosynthesis; L-valine biosynthesis; L-valine from pyruvate: step 1/4. The chain is Acetolactate synthase 2, chloroplastic from Brassica napus (Rape).